A 371-amino-acid chain; its full sequence is Cytochrome b (371 aa).

Transmembrane regions (helical) follow at residues 25–45 (FGSL…FLAI), 69–90 (WIMQ…YTHI), 105–125 (WLSG…GYVL), and 170–190 (FFAL…IHII). 2 residues coordinate heme b: His-75 and His-89. Residues His-174 and His-188 each coordinate heme b. His-193 provides a ligand contact to a ubiquinone. The next 4 membrane-spanning stretches (helical) occupy residues 218 to 238 (YKDM…MTFA), 280 to 300 (LGGT…PFTH), 312 to 332 (LTQI…WTAT), and 339 to 358 (FIYI…IMNP).

It belongs to the cytochrome b family. In terms of assembly, the cytochrome bc1 complex contains 3 respiratory subunits (MT-CYB, CYC1 and UQCRFS1), 2 core proteins (UQCRC1 and UQCRC2) and probably 6 low-molecular weight proteins. The cofactor is heme b.

It localises to the mitochondrion inner membrane. Its function is as follows. Component of the ubiquinol-cytochrome c reductase complex (complex III or cytochrome b-c1 complex) that is part of the mitochondrial respiratory chain. The b-c1 complex mediates electron transfer from ubiquinol to cytochrome c. Contributes to the generation of a proton gradient across the mitochondrial membrane that is then used for ATP synthesis. The polypeptide is Cytochrome b (MT-CYB) (Micruroides euryxanthus (Sonoran coral snake)).